A 104-amino-acid polypeptide reads, in one-letter code: Large ribosomal subunit protein bL21 (104 aa).

This sequence belongs to the bacterial ribosomal protein bL21 family. Part of the 50S ribosomal subunit. Contacts protein L20.

This protein binds to 23S rRNA in the presence of protein L20. This is Large ribosomal subunit protein bL21 from Moorella thermoacetica (strain ATCC 39073 / JCM 9320).